A 206-amino-acid chain; its full sequence is Large ribosomal subunit protein uL4 (206 aa).

This sequence belongs to the universal ribosomal protein uL4 family. Part of the 50S ribosomal subunit.

In terms of biological role, one of the primary rRNA binding proteins, this protein initially binds near the 5'-end of the 23S rRNA. It is important during the early stages of 50S assembly. It makes multiple contacts with different domains of the 23S rRNA in the assembled 50S subunit and ribosome. Functionally, forms part of the polypeptide exit tunnel. The protein is Large ribosomal subunit protein uL4 of Desulfatibacillum aliphaticivorans.